The primary structure comprises 758 residues: 5-methyltetrahydropteroyltriglutamate--homocysteine methyltransferase (758 aa).

Residues 16-19 (RELK) and K116 contribute to the 5-methyltetrahydropteroyltri-L-glutamate site. L-homocysteine contacts are provided by residues 436-438 (IGS) and E489. Residues 436–438 (IGS) and E489 contribute to the L-methionine site. 5-methyltetrahydropteroyltri-L-glutamate is bound by residues 520-521 (RC) and W566. D604 contributes to the L-homocysteine binding site. D604 contacts L-methionine. E610 lines the 5-methyltetrahydropteroyltri-L-glutamate pocket. H646, C648, and E670 together coordinate Zn(2+). The active-site Proton donor is H699. C731 serves as a coordination point for Zn(2+).

The protein belongs to the vitamin-B12 independent methionine synthase family. Zn(2+) is required as a cofactor.

It carries out the reaction 5-methyltetrahydropteroyltri-L-glutamate + L-homocysteine = tetrahydropteroyltri-L-glutamate + L-methionine. It functions in the pathway amino-acid biosynthesis; L-methionine biosynthesis via de novo pathway; L-methionine from L-homocysteine (MetE route): step 1/1. Its function is as follows. Catalyzes the transfer of a methyl group from 5-methyltetrahydrofolate to homocysteine resulting in methionine formation. The protein is 5-methyltetrahydropteroyltriglutamate--homocysteine methyltransferase of Xylella fastidiosa (strain 9a5c).